Consider the following 406-residue polypeptide: Tyrosine--tRNA ligase (406 aa).

Y35 lines the L-tyrosine pocket. Positions 40–49 (PTADSLHVGH) match the 'HIGH' region motif. L-tyrosine contacts are provided by Y168 and Q172. The 'KMSKS' region motif lies at 228 to 232 (KMGKT). K231 provides a ligand contact to ATP. The 65-residue stretch at 340-404 (SELLDILVEA…RGKKNYNKIV (65 aa)) folds into the S4 RNA-binding domain.

The protein belongs to the class-I aminoacyl-tRNA synthetase family. TyrS type 1 subfamily. As to quaternary structure, homodimer.

It is found in the cytoplasm. It carries out the reaction tRNA(Tyr) + L-tyrosine + ATP = L-tyrosyl-tRNA(Tyr) + AMP + diphosphate + H(+). Its function is as follows. Catalyzes the attachment of tyrosine to tRNA(Tyr) in a two-step reaction: tyrosine is first activated by ATP to form Tyr-AMP and then transferred to the acceptor end of tRNA(Tyr). This chain is Tyrosine--tRNA ligase, found in Clostridium perfringens (strain SM101 / Type A).